The chain runs to 135 residues: MQSSSPSTSHCSQIPIKIQHHIAKKRQVRRRRVDLDCGCSYYIHLDCINHGFTHRGVHHCASSNEWRLYLRDNKSPIFHDNQTQPTTIQQQIQFTNISNQVQPQLEEGTGDSQMFSQLPHLDDLTVSDWSFFKSL.

Residues K17–R32 carry the Nuclear localization signal motif. A zinc finger lies at C37–H54. Residues H120–L135 are transactivation.

The protein belongs to the geminiviridae transcriptional activator protein family. Monomer. Homodimer. Homooligomer. Self-interaction correlates with nuclear localization and efficient activation of transcription. Monomers suppress local silencing by interacting with and inactivating host adenosine kinase 2 (ADK2) in the cytoplasm. Interacts with and inhibits host SNF1 kinase. Binds to ssDNA. Post-translationally, phosphorylated.

Its subcellular location is the host nucleus. It localises to the host cytoplasm. In terms of biological role, strong activator of the late viral genes promoters. Acts as a suppressor of RNA-mediated gene silencing, also known as post-transcriptional gene silencing (PTGS), a mechanism of plant viral defense that limits the accumulation of viral RNAs. TrAP suppresses the host RNA silencing by inhibiting adenosine kinase 2 (ADK2), a kinase involved in a general methylation pathway. Also suppresses the host basal defense by interacting with and inhibiting SNF1 kinase, a key regulator of cell metabolism implicated in innate antiviral defense. Determines pathogenicity. The polypeptide is Transcriptional activator protein (Tomato yellow leaf curl Sardinia virus (isolate Spain-2) (TYLCSV)).